The primary structure comprises 786 residues: Pheromone-regulated membrane protein 10 (786 aa).

Residues 1 to 28 (MADSGDKDVSKSVRFDKESIESKKRSSV) are compositionally biased toward basic and acidic residues. 2 disordered regions span residues 1–65 (MADS…EDGN) and 77–103 (NGGA…DNDN). Low complexity predominate over residues 29–42 (DDSASSYSSSSSGQ). 10 helical membrane passes run 469–489 (WVCV…AFGG), 491–511 (WINL…QFIL), 521–541 (VFEI…GSIP), 545–565 (ICFG…YIIL), 584–604 (FYAI…AALF), 620–640 (PISP…ISLI), 645–665 (WTQL…TYWS), 675–695 (FTAA…SRIW), 697–717 (GLAV…GIAS), and 751–771 (FGIT…ASTL).

It belongs to the ThrE exporter (TC 2.A.79) family.

It is found in the membrane. The polypeptide is Pheromone-regulated membrane protein 10 (Candida glabrata (strain ATCC 2001 / BCRC 20586 / JCM 3761 / NBRC 0622 / NRRL Y-65 / CBS 138) (Yeast)).